A 360-amino-acid polypeptide reads, in one-letter code: Photosystem II protein D1 (360 aa).

3 helical membrane-spanning segments follow: residues 29-46 (YIGW…TATS), 118-133 (HFLL…EWEL), and 142-156 (WISV…AAAA). Histidine 118 contacts chlorophyll a. Tyrosine 126 contacts pheophytin a. [CaMn4O5] cluster-binding residues include aspartate 170 and glutamate 189. The chain crosses the membrane as a helical span at residues 197–218 (FHQLGVAGVFGGSLFSAMHGSL). Histidine 198 serves as a coordination point for chlorophyll a. A quinone-binding positions include histidine 215 and 264-265 (SF). Histidine 215 provides a ligand contact to Fe cation. Residue histidine 272 participates in Fe cation binding. The helical transmembrane segment at 274–288 (FLGLWPVVGIWFTAM) threads the bilayer. Histidine 332, glutamate 333, aspartate 342, and alanine 344 together coordinate [CaMn4O5] cluster. Residues 345-360 (SSNSLPVSLVAPSVNG) constitute a propeptide that is removed on maturation.

The protein belongs to the reaction center PufL/M/PsbA/D family. As to quaternary structure, PSII is composed of 1 copy each of membrane proteins PsbA, PsbB, PsbC, PsbD, PsbE, PsbF, PsbH, PsbI, PsbJ, PsbK, PsbL, PsbM, PsbT, PsbX, PsbY, PsbZ, Psb30/Ycf12, at least 3 peripheral proteins of the oxygen-evolving complex and a large number of cofactors. It forms dimeric complexes. Requires The D1/D2 heterodimer binds P680, chlorophylls that are the primary electron donor of PSII, and subsequent electron acceptors. It shares a non-heme iron and each subunit binds pheophytin, quinone, additional chlorophylls, carotenoids and lipids. D1 provides most of the ligands for the Mn4-Ca-O5 cluster of the oxygen-evolving complex (OEC). There is also a Cl(-1) ion associated with D1 and D2, which is required for oxygen evolution. The PSII complex binds additional chlorophylls, carotenoids and specific lipids. as cofactor. Tyr-161 forms a radical intermediate that is referred to as redox-active TyrZ, YZ or Y-Z. Post-translationally, C-terminally processed by CTPA; processing is essential to allow assembly of the oxygen-evolving complex and thus photosynthetic growth.

Its subcellular location is the plastid. It localises to the chloroplast thylakoid membrane. The enzyme catalyses 2 a plastoquinone + 4 hnu + 2 H2O = 2 a plastoquinol + O2. In terms of biological role, photosystem II (PSII) is a light-driven water:plastoquinone oxidoreductase that uses light energy to abstract electrons from H(2)O, generating O(2) and a proton gradient subsequently used for ATP formation. It consists of a core antenna complex that captures photons, and an electron transfer chain that converts photonic excitation into a charge separation. The D1/D2 (PsbA/PsbD) reaction center heterodimer binds P680, the primary electron donor of PSII as well as several subsequent electron acceptors. This is Photosystem II protein D1 from Gracilaria tenuistipitata var. liui (Red alga).